The chain runs to 626 residues: MAATATIPSSTTASATTTATAAALGEVEDEGLLASLFRDRFPEAQWRERPDVGRYLRELSGSGLERLRREPERLAEERAQLLQQTRDLAFANYKTFIRGAECTERIHRLFGDVEESLGRLLDRLPSLQQSCRNFVKEAEEISSNRRMNTLTLNRHTEILEILEIPQLMDTCVRNSYYEEALELAAYVRRLERKYSSIPVIQGIVNEVRQSMQLMLSQLIQQLRTNIQLPACLRVIGFLRQMDVFTEAELRVKFLQARDAWLRSILTAIPNDDPYFHITKTIEACRVHLFDIITQYRAIFSDEDPLLPPAMGEHMVNESAIFHGWVLQKVSQFLQVLETDLNRGIGSRLDSLLGQCMYFGLSFSRVGADFRGQLVPVFQQVAISTFQKAIQEAVEKFQDEMNSYTLISTPAVLGSSALPAAAPVTQPGTLQPPMVLLDFPPLACFLNSILVAFNDLRLCCPVALAQEVTRALEDALDKVTKVILAFHRAEEAAFSSGEQELFVQFCTVFLEDLVPYLNRCLQVLFPPAQIAQTLGIPPTQLSKYGNLGHVNVSVVQEPLAFILPKREPVFCLDKELVPELPAPAPALPPNAPSPEPVTPVTPAVPDAGQEEVESAGPPQPDEPSAGI.

Positions 580–598 (PAPAPALPPNAPSPEPVTP) are enriched in pro residues. Residues 580 to 626 (PAPAPALPPNAPSPEPVTPVTPAVPDAGQEEVESAGPPQPDEPSAGI) form a disordered region.

Belongs to the COG8 family. In terms of assembly, component of the conserved oligomeric Golgi complex which is composed of eight different subunits and is required for normal Golgi morphology and localization.

It localises to the golgi apparatus membrane. Required for normal Golgi function. This is Conserved oligomeric Golgi complex subunit 8 (COG8) from Bos taurus (Bovine).